Reading from the N-terminus, the 164-residue chain is Large ribosomal subunit protein uL15 (164 aa).

Residues 1 to 33 (MTSKKRRQRGSRTHGGGTHKNRRGAGHRGGRGR) show a composition bias toward basic residues. Disordered stretches follow at residues 1–59 (MTSK…PGAE) and 137–164 (AGGS…NDEN). Over residues 34 to 43 (AGRDKHEQHN) the composition is skewed to basic and acidic residues. Residues 153 to 164 (GEDEEPNSNDEN) show a composition bias toward acidic residues.

It belongs to the universal ribosomal protein uL15 family. As to quaternary structure, part of the 50S ribosomal subunit.

In terms of biological role, binds to the 23S rRNA. The sequence is that of Large ribosomal subunit protein uL15 from Haloquadratum walsbyi (strain DSM 16790 / HBSQ001).